The sequence spans 257 residues: Steroid 5-alpha-reductase DET2 (257 aa).

6 consecutive transmembrane segments (helical) span residues 11-31 (FIVF…QFFT), 47-67 (ISPP…TIIV), 78-97 (LAFL…TIIY), 110-130 (FPLN…YIQS), 151-171 (IGLV…GVLL), and 200-220 (IMEW…AFFV).

The protein belongs to the steroid 5-alpha reductase family. In terms of tissue distribution, mostly expressed in leaves and hypocotyls and, to a lower extent, in stems, cotyledons, roots, seeds and callus.

The protein localises to the membrane. It carries out the reaction a 3-oxo-5alpha-steroid + NADP(+) = a 3-oxo-Delta(4)-steroid + NADPH + H(+). Its pathway is plant hormone biosynthesis; brassinosteroid biosynthesis. Its activity is regulated as follows. Repressed by steroid (4-MA, VG106, PD91, PD17, Finasteride) and non-steroid (AS601811, AFA27, AFA76, AFA131, AFA192) inhibitors; steroid inhibitors are generally more efficient. In terms of biological role, involved in a reduction step in the biosynthesis of the plant steroid, brassinolide (BL). Can use progesterone, testosterone, androstenedione and campestenone as substrate. This chain is Steroid 5-alpha-reductase DET2, found in Solanum lycopersicum (Tomato).